A 191-amino-acid chain; its full sequence is Inosine triphosphate pyrophosphatase (191 aa).

15–20 (TGNTNK) is a binding site for ITP. Glutamate 43 lines the Mg(2+) pocket. ITP-binding positions include lysine 55, 71 to 72 (DT), lysine 88, 147 to 150 (FGWD), lysine 168, and 173 to 174 (HR).

The protein belongs to the HAM1 NTPase family. As to quaternary structure, homodimer. Requires Mg(2+) as cofactor. The cofactor is Mn(2+).

The protein resides in the cytoplasm. It is found in the nucleus. It carries out the reaction ITP + H2O = IMP + diphosphate + H(+). The enzyme catalyses dITP + H2O = dIMP + diphosphate + H(+). It catalyses the reaction XTP + H2O = XMP + diphosphate + H(+). Functionally, pyrophosphatase that hydrolyzes non-canonical purine nucleotides such as inosine triphosphate (ITP), deoxyinosine triphosphate (dITP) or xanthosine 5'-triphosphate (XTP) to their respective monophosphate derivatives. The enzyme does not distinguish between the deoxy- and ribose forms. Probably excludes non-canonical purines from RNA and DNA precursor pools, thus preventing their incorporation into RNA and DNA and avoiding chromosomal lesions. The chain is Inosine triphosphate pyrophosphatase from Chaetomium globosum (strain ATCC 6205 / CBS 148.51 / DSM 1962 / NBRC 6347 / NRRL 1970) (Soil fungus).